The primary structure comprises 507 residues: ATP synthase subunit alpha, chloroplastic (507 aa).

170-177 is a binding site for ATP; sequence GDRQTGKT.

This sequence belongs to the ATPase alpha/beta chains family. As to quaternary structure, F-type ATPases have 2 components, CF(1) - the catalytic core - and CF(0) - the membrane proton channel. CF(1) has five subunits: alpha(3), beta(3), gamma(1), delta(1), epsilon(1). CF(0) has four main subunits: a, b, b' and c.

The protein localises to the plastid. The protein resides in the chloroplast thylakoid membrane. The enzyme catalyses ATP + H2O + 4 H(+)(in) = ADP + phosphate + 5 H(+)(out). Functionally, produces ATP from ADP in the presence of a proton gradient across the membrane. The alpha chain is a regulatory subunit. In Marchantia polymorpha (Common liverwort), this protein is ATP synthase subunit alpha, chloroplastic.